The primary structure comprises 513 residues: MEISWGRALWRNFLGQSPDWYKLALIIFLIVNPLIFLISPFVAGWLLVAEFIFTLAMALKCYPLLPGGLLAIEAVFIGMTSAEHVREEVAANLEVLLLLMFMVAGIYFMKQLLLFIFTRLLLSIRSKMLLSLSFCVAAAFLSAFLDALTVVAVVISVAVGFYGIYHRVASSRAEDTDLQDDSHIDKHYKVVLEQFRGFLRSLMMHAGVGTALGGVMTMVGEPQNLIIAKAAGWHFGDFFLRMSPVTVPVLICGLLTCLLVEKLRWFGYGETLPEKVREVLQQFDDQSRNQRTRQDKIRLIVQAIIGVWLVTALALHLAEVGLIGLSVIILATSLTGVTDEHAIGKAFTESLPFTALLTVFFSVVAVIIDQQLFSPIIQFVLQASEHAQLSLFYIFNGLLSSISDNVFVGTIYINEAKAAMESGAITLKQYELLAVAINTGTNLPSVATPNGQAAFLFLLTSALAPLIRLSYGRMVWMALPYTLVLTLVGLLCVEFTLAPVTEWFMQMGWIATL.

12 consecutive transmembrane segments (helical) span residues 23–43, 52–72, 97–117, 120–140, 144–164, 202–222, 238–258, 303–323, 348–368, 391–411, 447–467, and 475–495; these read LALI…PFVA, IFTL…LLAI, LLLM…LFIF, LLLS…AAAF, FLDA…FYGI, LMMH…VGEP, FFLR…LTCL, AIIG…VGLI, TESL…AVII, LFYI…VGTI, ATPN…APLI, and VWMA…CVEF.

This sequence belongs to the NhaB Na(+)/H(+) (TC 2.A.34) antiporter family.

It localises to the cell inner membrane. The enzyme catalyses 2 Na(+)(in) + 3 H(+)(out) = 2 Na(+)(out) + 3 H(+)(in). In terms of biological role, na(+)/H(+) antiporter that extrudes sodium in exchange for external protons. The protein is Na(+)/H(+) antiporter NhaB of Escherichia coli O6:K15:H31 (strain 536 / UPEC).